Reading from the N-terminus, the 87-residue chain is Exodeoxyribonuclease 7 small subunit (87 aa).

Belongs to the XseB family. As to quaternary structure, heterooligomer composed of large and small subunits.

It is found in the cytoplasm. It carries out the reaction Exonucleolytic cleavage in either 5'- to 3'- or 3'- to 5'-direction to yield nucleoside 5'-phosphates.. Functionally, bidirectionally degrades single-stranded DNA into large acid-insoluble oligonucleotides, which are then degraded further into small acid-soluble oligonucleotides. In Halorhodospira halophila (strain DSM 244 / SL1) (Ectothiorhodospira halophila (strain DSM 244 / SL1)), this protein is Exodeoxyribonuclease 7 small subunit.